A 428-amino-acid chain; its full sequence is Glutamate-1-semialdehyde 2,1-aminomutase (428 aa).

The residue at position 265 (Lys265) is an N6-(pyridoxal phosphate)lysine.

This sequence belongs to the class-III pyridoxal-phosphate-dependent aminotransferase family. HemL subfamily. In terms of assembly, homodimer. It depends on pyridoxal 5'-phosphate as a cofactor.

The protein resides in the cytoplasm. It catalyses the reaction (S)-4-amino-5-oxopentanoate = 5-aminolevulinate. Its pathway is porphyrin-containing compound metabolism; protoporphyrin-IX biosynthesis; 5-aminolevulinate from L-glutamyl-tRNA(Glu): step 2/2. This is Glutamate-1-semialdehyde 2,1-aminomutase from Ruthia magnifica subsp. Calyptogena magnifica.